The primary structure comprises 206 residues: Peptidyl-tRNA hydrolase (206 aa).

Position 14 (Tyr-14) interacts with tRNA. His-19 serves as the catalytic Proton acceptor. Tyr-64 and Asn-66 together coordinate tRNA. The tract at residues 182–206 (FNQKNKKKKEKEQPEAATDQLLENK) is disordered.

This sequence belongs to the PTH family. As to quaternary structure, monomer.

Its subcellular location is the cytoplasm. The catalysed reaction is an N-acyl-L-alpha-aminoacyl-tRNA + H2O = an N-acyl-L-amino acid + a tRNA + H(+). In terms of biological role, hydrolyzes ribosome-free peptidyl-tRNAs (with 1 or more amino acids incorporated), which drop off the ribosome during protein synthesis, or as a result of ribosome stalling. Functionally, catalyzes the release of premature peptidyl moieties from peptidyl-tRNA molecules trapped in stalled 50S ribosomal subunits, and thus maintains levels of free tRNAs and 50S ribosomes. The chain is Peptidyl-tRNA hydrolase from Desulforamulus reducens (strain ATCC BAA-1160 / DSM 100696 / MI-1) (Desulfotomaculum reducens).